Consider the following 405-residue polypeptide: Cytoplasmic tRNA 2-thiolation protein 2 (405 aa).

It belongs to the CTU2/NCS2 family.

The protein localises to the cytoplasm. Its pathway is tRNA modification; 5-methoxycarbonylmethyl-2-thiouridine-tRNA biosynthesis. Plays a central role in 2-thiolation of mcm(5)S(2)U at tRNA wobble positions of tRNA(Lys), tRNA(Glu) and tRNA(Gln). May act by forming a heterodimer with NCS6/CTU1 that ligates sulfur from thiocarboxylated URM1 onto the uridine of tRNAs at wobble position. This chain is Cytoplasmic tRNA 2-thiolation protein 2, found in Drosophila simulans (Fruit fly).